The following is a 264-amino-acid chain: Orotidine 5'-phosphate decarboxylase (264 aa).

Substrate contacts are provided by residues Asp-37, 59–61, 91–100, Tyr-217, and Arg-235; these read KTH and DRKFADIGNT. The active-site Proton donor is Lys-93.

This sequence belongs to the OMP decarboxylase family.

It catalyses the reaction orotidine 5'-phosphate + H(+) = UMP + CO2. Its pathway is pyrimidine metabolism; UMP biosynthesis via de novo pathway; UMP from orotate: step 2/2. This chain is Orotidine 5'-phosphate decarboxylase (URA3), found in Torulaspora delbrueckii (Yeast).